A 461-amino-acid polypeptide reads, in one-letter code: Bifunctional protein GlmU (461 aa).

Positions 1-227 (MEVIALILAA…PDEVLGVNDR (227 aa)) are pyrophosphorylase. UDP-N-acetyl-alpha-D-glucosamine contacts are provided by residues 8-11 (LAAG), K22, Q73, 78-79 (GT), 100-102 (YGD), G137, E152, N167, and N225. D102 contacts Mg(2+). N225 is a Mg(2+) binding site. The interval 228 to 248 (RQLAELERIYQVHQARALMER) is linker. The interval 249-461 (GVTLRDPARF…EKARKESCAE (213 aa)) is N-acetyltransferase. The UDP-N-acetyl-alpha-D-glucosamine site is built by R332 and K350. The active-site Proton acceptor is the H362. UDP-N-acetyl-alpha-D-glucosamine contacts are provided by Y365 and N376. Residues A379, 385–386 (NY), S404, A422, and R439 contribute to the acetyl-CoA site.

This sequence in the N-terminal section; belongs to the N-acetylglucosamine-1-phosphate uridyltransferase family. In the C-terminal section; belongs to the transferase hexapeptide repeat family. As to quaternary structure, homotrimer. Mg(2+) is required as a cofactor.

It localises to the cytoplasm. It carries out the reaction alpha-D-glucosamine 1-phosphate + acetyl-CoA = N-acetyl-alpha-D-glucosamine 1-phosphate + CoA + H(+). The enzyme catalyses N-acetyl-alpha-D-glucosamine 1-phosphate + UTP + H(+) = UDP-N-acetyl-alpha-D-glucosamine + diphosphate. The protein operates within nucleotide-sugar biosynthesis; UDP-N-acetyl-alpha-D-glucosamine biosynthesis; N-acetyl-alpha-D-glucosamine 1-phosphate from alpha-D-glucosamine 6-phosphate (route II): step 2/2. Its pathway is nucleotide-sugar biosynthesis; UDP-N-acetyl-alpha-D-glucosamine biosynthesis; UDP-N-acetyl-alpha-D-glucosamine from N-acetyl-alpha-D-glucosamine 1-phosphate: step 1/1. It participates in bacterial outer membrane biogenesis; LPS lipid A biosynthesis. Functionally, catalyzes the last two sequential reactions in the de novo biosynthetic pathway for UDP-N-acetylglucosamine (UDP-GlcNAc). The C-terminal domain catalyzes the transfer of acetyl group from acetyl coenzyme A to glucosamine-1-phosphate (GlcN-1-P) to produce N-acetylglucosamine-1-phosphate (GlcNAc-1-P), which is converted into UDP-GlcNAc by the transfer of uridine 5-monophosphate (from uridine 5-triphosphate), a reaction catalyzed by the N-terminal domain. In Methylococcus capsulatus (strain ATCC 33009 / NCIMB 11132 / Bath), this protein is Bifunctional protein GlmU.